Consider the following 356-residue polypeptide: Glutamate 5-kinase (356 aa).

Lys-6 is a binding site for ATP. Substrate is bound by residues Ser-46, Asp-135, and Asn-147. Residue 202–208 participates in ATP binding; sequence TGGMRSK. The PUA domain maps to 265 to 342; sequence KGIIVVDRGA…SEVRKLLNTT (78 aa).

The protein belongs to the glutamate 5-kinase family.

Its subcellular location is the cytoplasm. The enzyme catalyses L-glutamate + ATP = L-glutamyl 5-phosphate + ADP. It participates in amino-acid biosynthesis; L-proline biosynthesis; L-glutamate 5-semialdehyde from L-glutamate: step 1/2. Catalyzes the transfer of a phosphate group to glutamate to form L-glutamate 5-phosphate. The protein is Glutamate 5-kinase of Aquifex aeolicus (strain VF5).